A 614-amino-acid polypeptide reads, in one-letter code: Asparagine synthetase [glutamine-hydrolyzing] 3 (614 aa).

Cys-2 acts as the For GATase activity in catalysis. A Glutamine amidotransferase type-2 domain is found at Cys-2–Asp-216. L-glutamine-binding positions include Arg-50–Val-54, Asn-77–Glu-79, and Asp-102. Ser-377 to Gly-378 lines the ATP pocket.

This sequence belongs to the asparagine synthetase family.

The enzyme catalyses L-aspartate + L-glutamine + ATP + H2O = L-asparagine + L-glutamate + AMP + diphosphate + H(+). Its pathway is amino-acid biosynthesis; L-asparagine biosynthesis; L-asparagine from L-aspartate (L-Gln route): step 1/1. Asparagine synthetase involved in sporulation. The polypeptide is Asparagine synthetase [glutamine-hydrolyzing] 3 (asnO) (Bacillus subtilis (strain 168)).